The sequence spans 246 residues: Eukaryotic translation initiation factor 6 (246 aa).

Serine 174 and serine 175 each carry phosphoserine; by CK1.

It belongs to the eIF-6 family. In terms of assembly, monomer. Associates with the 60S ribosomal subunit. Phosphorylation at Ser-174 and Ser-175 promotes nuclear export.

Its subcellular location is the cytoplasm. It is found in the nucleus. The protein resides in the nucleolus. Binds to the 60S ribosomal subunit and prevents its association with the 40S ribosomal subunit to form the 80S initiation complex in the cytoplasm. Is also involved in ribosome biogenesis. Associates with pre-60S subunits in the nucleus and is involved in its nuclear export. The protein is Eukaryotic translation initiation factor 6 of Sordaria macrospora (strain ATCC MYA-333 / DSM 997 / K(L3346) / K-hell).